The chain runs to 114 residues: Large ribosomal subunit protein uL18 (114 aa).

Belongs to the universal ribosomal protein uL18 family. In terms of assembly, part of the 50S ribosomal subunit; part of the 5S rRNA/L5/L18/L25 subcomplex. Contacts the 5S and 23S rRNAs.

Functionally, this is one of the proteins that bind and probably mediate the attachment of the 5S RNA into the large ribosomal subunit, where it forms part of the central protuberance. This Bacteroides thetaiotaomicron (strain ATCC 29148 / DSM 2079 / JCM 5827 / CCUG 10774 / NCTC 10582 / VPI-5482 / E50) protein is Large ribosomal subunit protein uL18.